The sequence spans 224 residues: IAP-like protein p27 (224 aa).

A BIR repeat occupies Val-29–Met-92. Positions 62, 65, 82, and 89 each coordinate Zn(2+).

In terms of biological role, not essential for growth or virulence. Does not have antiapoptotic function. This chain is IAP-like protein p27 (p27), found in Ornithodoros (relapsing fever ticks).